The primary structure comprises 165 residues: Thiol peroxidase (165 aa).

Residues 18–165 (PAVGSPAPAF…YEAALAALGA (148 aa)) form the Thioredoxin domain. The active-site Cysteine sulfenic acid (-SOH) intermediate is cysteine 60. A disulfide bond links cysteine 60 and cysteine 93.

This sequence belongs to the peroxiredoxin family. Tpx subfamily. As to quaternary structure, homodimer.

It carries out the reaction a hydroperoxide + [thioredoxin]-dithiol = an alcohol + [thioredoxin]-disulfide + H2O. Its function is as follows. Thiol-specific peroxidase that catalyzes the reduction of hydrogen peroxide and organic hydroperoxides to water and alcohols, respectively. Plays a role in cell protection against oxidative stress by detoxifying peroxides. The chain is Thiol peroxidase from Mycobacterium bovis (strain ATCC BAA-935 / AF2122/97).